A 567-amino-acid polypeptide reads, in one-letter code: Arginine--tRNA ligase (567 aa).

The 'HIGH' region signature appears at 121–131; that stretch reads ANPNGPLHVGH.

The protein belongs to the class-I aminoacyl-tRNA synthetase family.

The protein resides in the cytoplasm. It catalyses the reaction tRNA(Arg) + L-arginine + ATP = L-arginyl-tRNA(Arg) + AMP + diphosphate. This is Arginine--tRNA ligase from Methanosarcina acetivorans (strain ATCC 35395 / DSM 2834 / JCM 12185 / C2A).